The following is a 500-amino-acid chain: FAD-linked oxidoreductase srdI (500 aa).

A signal peptide spans 1-20 (MHLSSSLLFTSALLAGGINA). N-linked (GlcNAc...) asparagine glycosylation is present at asparagine 47. In terms of domain architecture, FAD-binding PCMH-type spans 69–241 (YRPPSYQAAI…TQATYKMHKS (173 aa)). 2 N-linked (GlcNAc...) asparagine glycosylation sites follow: asparagine 257 and asparagine 282.

Belongs to the oxygen-dependent FAD-linked oxidoreductase family. The cofactor is FAD.

Its function is as follows. FAD-linked oxidoreductase; part of the gene cluster that mediates the biosynthesis of sordarial, a salicylic aldehyde structurally related to the phytotoxin pyriculol. The most interesting aspect of this pathway is formation of an aromatic product from the highly reducing polyketide synthase srdA. SrdA synthesizes a reduced polyketide chain from one molecule of acetyl-CoA and five molecules of malonyl-CoA. The polyketide chain is then reductively released as an aldehyde. The oxidoreductases srdC, srdD and srdE then oxidize one of the hydroxy groups to facilitate the intramolecular aldol condensation, followed by dehydration to yield a salicylic aldehyde. This aldehyde can undergo facile reduction by endogenous reductases to yield the alcohol 1-hydroxy-2-hydroxymethyl-3-pent-1,3-dienylbenzene. The flavin-dependent srdI counteract against the propensity of the aldehydes to be reduced under physiological conditions and is responsible for reoxidizing 1-hydroxy-2-hydroxymethyl-3-pent-1,3-dienylbenzene back to the salicylic aldehyde. This salicylic aldehyde is then selectively epoxidized by the cupin-domain-containing oxidoreductase srdB to yield the epoxide, which can be hydrolyzed stereoselectively by the hydrolase srdG to give the final product sordarial. This chain is FAD-linked oxidoreductase srdI, found in Neurospora crassa (strain ATCC 24698 / 74-OR23-1A / CBS 708.71 / DSM 1257 / FGSC 987).